Consider the following 356-residue polypeptide: Tetraacyldisaccharide 4'-kinase (356 aa).

Residue F67–T74 participates in ATP binding.

It belongs to the LpxK family.

The catalysed reaction is a lipid A disaccharide + ATP = a lipid IVA + ADP + H(+). Its pathway is glycolipid biosynthesis; lipid IV(A) biosynthesis; lipid IV(A) from (3R)-3-hydroxytetradecanoyl-[acyl-carrier-protein] and UDP-N-acetyl-alpha-D-glucosamine: step 6/6. Its function is as follows. Transfers the gamma-phosphate of ATP to the 4'-position of a tetraacyldisaccharide 1-phosphate intermediate (termed DS-1-P) to form tetraacyldisaccharide 1,4'-bis-phosphate (lipid IVA). In Herminiimonas arsenicoxydans, this protein is Tetraacyldisaccharide 4'-kinase.